A 409-amino-acid polypeptide reads, in one-letter code: Epoxyqueuosine reductase (409 aa).

The segment at 1–23 (MDRNPELAIADARPSQDGRAAPS) is disordered. Asp178 functions as the Proton donor in the catalytic mechanism. The 30-residue stretch at 232 to 261 (AAPETPGAHCGSCTRCLGACPTGAIVAPYR) folds into the 4Fe-4S ferredoxin-type domain. Cys241, Cys244, Cys247, Cys251, Cys267, Cys294, Cys297, and Cys301 together coordinate [4Fe-4S] cluster.

Belongs to the QueG family. Monomer. Cob(II)alamin serves as cofactor. [4Fe-4S] cluster is required as a cofactor.

The protein resides in the cytoplasm. The enzyme catalyses epoxyqueuosine(34) in tRNA + AH2 = queuosine(34) in tRNA + A + H2O. It functions in the pathway tRNA modification; tRNA-queuosine biosynthesis. In terms of biological role, catalyzes the conversion of epoxyqueuosine (oQ) to queuosine (Q), which is a hypermodified base found in the wobble positions of tRNA(Asp), tRNA(Asn), tRNA(His) and tRNA(Tyr). This is Epoxyqueuosine reductase from Burkholderia pseudomallei (strain K96243).